Here is a 284-residue protein sequence, read N- to C-terminus: 4-diphosphocytidyl-2-C-methyl-D-erythritol kinase (284 aa).

Lysine 14 is an active-site residue. 97 to 107 (PMGGGVGGGSS) lines the ATP pocket. Aspartate 139 is a catalytic residue.

This sequence belongs to the GHMP kinase family. IspE subfamily.

The catalysed reaction is 4-CDP-2-C-methyl-D-erythritol + ATP = 4-CDP-2-C-methyl-D-erythritol 2-phosphate + ADP + H(+). It functions in the pathway isoprenoid biosynthesis; isopentenyl diphosphate biosynthesis via DXP pathway; isopentenyl diphosphate from 1-deoxy-D-xylulose 5-phosphate: step 3/6. Its function is as follows. Catalyzes the phosphorylation of the position 2 hydroxy group of 4-diphosphocytidyl-2C-methyl-D-erythritol. The polypeptide is 4-diphosphocytidyl-2-C-methyl-D-erythritol kinase (Pseudoalteromonas translucida (strain TAC 125)).